A 420-amino-acid polypeptide reads, in one-letter code: 3-phosphoshikimate 1-carboxyvinyltransferase (420 aa).

Residues 1 to 24 (MTRTAKLTIIPPGRPLSGRAMPPG) form a disordered region. The 3-phosphoshikimate site is built by Lys26, Ser27, and Arg31. Lys26 serves as a coordination point for phosphoenolpyruvate. Positions 97 and 125 each coordinate phosphoenolpyruvate. 3-phosphoshikimate contacts are provided by Ser170, Ser171, Gln172, Asp297, Asn320, and Lys324. Phosphoenolpyruvate is bound at residue Gln172. The Proton acceptor role is filled by Asp297. Phosphoenolpyruvate contacts are provided by Arg328, Arg375, and Lys400.

The protein belongs to the EPSP synthase family. Monomer.

Its subcellular location is the cytoplasm. The enzyme catalyses 3-phosphoshikimate + phosphoenolpyruvate = 5-O-(1-carboxyvinyl)-3-phosphoshikimate + phosphate. Its pathway is metabolic intermediate biosynthesis; chorismate biosynthesis; chorismate from D-erythrose 4-phosphate and phosphoenolpyruvate: step 6/7. In terms of biological role, catalyzes the transfer of the enolpyruvyl moiety of phosphoenolpyruvate (PEP) to the 5-hydroxyl of shikimate-3-phosphate (S3P) to produce enolpyruvyl shikimate-3-phosphate and inorganic phosphate. In Rhizobium etli (strain CIAT 652), this protein is 3-phosphoshikimate 1-carboxyvinyltransferase.